The primary structure comprises 309 residues: Protein phosphatase 1 regulatory subunit 42 (309 aa).

7 LRR repeats span residues 29-50 (KITH…SLCK), 51-72 (NLSV…NYAT), 73-94 (NLTH…RSLK), 95-116 (KLEK…EGLG), 117-138 (ELRE…LFDP), 147-168 (SLCI…ELLE), and 169-190 (NLNQ…EFLL). Residues 204-242 (NPVCLKPKYRDRLILVSKSLEFLDGKEIKNIERQFLMNW) form the LRRCT domain.

Interacts with PPP1CC isoform gamma-2; the interaction is direct. Interacts with actin, dynein, KIF5B, KIFC1 and tubulin. Associates with microtubules. In terms of processing, phosphorylated; in the testis.

It is found in the cytoplasm. The protein resides in the cytoskeleton. Its subcellular location is the microtubule organizing center. It localises to the centrosome. Its function is as follows. Regulates phosphatase activity of protein phosphatase 1 (PP1) complexes in the testis. This Homo sapiens (Human) protein is Protein phosphatase 1 regulatory subunit 42.